The following is a 518-amino-acid chain: uncharacterized protein (518 aa).

ABC transporter domains lie at 4–260 (LSVK…QLEA) and 324–518 (LIFE…TKVL). ATP is bound by residues 36-43 (GANGEGKS) and 357-364 (GANGIGKT).

This sequence belongs to the ABC transporter superfamily.

This is an uncharacterized protein from Bacillus subtilis (strain 168).